The primary structure comprises 289 residues: Palmitoyl-protein thioesterase 3 (289 aa).

Positions 1 to 20 (MRILSSLILLIALAIALVSA) are cleaved as a signal peptide. Ser97 is an active-site residue. Asn189 and Asn195 each carry an N-linked (GlcNAc...) asparagine glycan. Catalysis depends on residues Asp210 and His266. Asn281 carries N-linked (GlcNAc...) asparagine glycosylation.

It belongs to the palmitoyl-protein thioesterase family.

The protein localises to the lysosome. The enzyme catalyses S-hexadecanoyl-L-cysteinyl-[protein] + H2O = L-cysteinyl-[protein] + hexadecanoate + H(+). Functionally, removes thioester-linked fatty acyl groups such as palmitate from modified cysteine residues in proteins or peptides during lysosomal degradation. This Dictyostelium discoideum (Social amoeba) protein is Palmitoyl-protein thioesterase 3 (ppt3).